Reading from the N-terminus, the 130-residue chain is Small ribosomal subunit protein eS17 (130 aa).

It belongs to the eukaryotic ribosomal protein eS17 family.

This chain is Small ribosomal subunit protein eS17 (RPS17), found in Theileria parva (East coast fever infection agent).